The following is a 509-amino-acid chain: ATP synthase subunit alpha (509 aa).

169–176 is an ATP binding site; the sequence is GDRQTGKT.

It belongs to the ATPase alpha/beta chains family. In terms of assembly, F-type ATPases have 2 components, CF(1) - the catalytic core - and CF(0) - the membrane proton channel. CF(1) has five subunits: alpha(3), beta(3), gamma(1), delta(1), epsilon(1). CF(0) has three main subunits: a(1), b(2) and c(9-12). The alpha and beta chains form an alternating ring which encloses part of the gamma chain. CF(1) is attached to CF(0) by a central stalk formed by the gamma and epsilon chains, while a peripheral stalk is formed by the delta and b chains.

The protein resides in the cell inner membrane. The catalysed reaction is ATP + H2O + 4 H(+)(in) = ADP + phosphate + 5 H(+)(out). Functionally, produces ATP from ADP in the presence of a proton gradient across the membrane. The alpha chain is a regulatory subunit. This is ATP synthase subunit alpha from Rhizobium johnstonii (strain DSM 114642 / LMG 32736 / 3841) (Rhizobium leguminosarum bv. viciae).